A 495-amino-acid polypeptide reads, in one-letter code: MTVMSGENADEASTAPGHPQDGSYPRQADHDDHECCERVVINISGLRFETQLKTLAQFPNTLLGNPKKRMRYFDPLRNEYFFDRNRPSFDAILYYYQSGGRLRRPVNVPLDMFSEEIKFYELGEEAMEKFREDEGFIKEEERPLPEKEYQRQVWLLFEYPESSGPARVIAIVSVMVILISIVIFCLETLPELKDDKDFTGTIHRIDNTTVIYTSNIFTDPFFIVETLCIIWFSFELVVRFFACPSKTDFFKNIMNFIDIVAIIPYFITLGTEIAEQEGNQKGEQATSLAILRVIRLVRVFRIFKLSRHSKGLQILGQTLKASMRELGLLIFFLFIGVILFSSAVYFAEAEEAESHFSSIPDAFWWAVVSMTTVGYGDMYPVTIGGKIVGSLCAIAGVLTIALPVPVIVSNFNYFYHRETEGEEQAQLLHVSSPNLASDSDLSRRSSSTISKSEYMEIEEDMNNSIAHYRQANIRTGNCTTADQNCVNKSKLLTDV.

A disordered region spans residues 1 to 30 (MTVMSGENADEASTAPGHPQDGSYPRQADH). Residues 1–128 (MTVMSGENAD…FYELGEEAME (128 aa)) are tetramerization domain. Residues 1–164 (MTVMSGENAD…LLFEYPESSG (164 aa)) are Cytoplasmic-facing. S23 is subject to Phosphoserine. The chain crosses the membrane as a helical span at residues 165-186 (PARVIAIVSVMVILISIVIFCL). The Extracellular portion of the chain corresponds to 187–220 (ETLPELKDDKDFTGTIHRIDNTTVIYTSNIFTDP). N207 carries an N-linked (GlcNAc...) asparagine glycan. The chain crosses the membrane as a helical span at residues 221-242 (FFIVETLCIIWFSFELVVRFFA). C243 is lipidated: S-palmitoyl cysteine. Residues 243 to 253 (CPSKTDFFKNI) lie on the Cytoplasmic side of the membrane. Residues 254 to 274 (MNFIDIVAIIPYFITLGTEIA) form a helical membrane-spanning segment. The Extracellular segment spans residues 275–287 (EQEGNQKGEQATS). A helical; Voltage-sensor membrane pass occupies residues 288–308 (LAILRVIRLVRVFRIFKLSRH). The Cytoplasmic segment spans residues 309–323 (SKGLQILGQTLKASM). Positions 310–323 (KGLQILGQTLKASM) are S4-S5 linker. A Phosphoserine; by PKA modification is found at S322. Residues 324–345 (RELGLLIFFLFIGVILFSSAVY) traverse the membrane as a helical segment. Residues 346–359 (FAEAEEAESHFSSI) lie on the Extracellular side of the membrane. Positions 360-371 (PDAFWWAVVSMT) form an intramembrane region, helical. The Selectivity filter motif lies at 372 to 377 (TVGYGD). Residues 372–379 (TVGYGDMY) lie within the membrane without spanning it. Over 380 to 386 (PVTIGGK) the chain is Extracellular. Residues 387–415 (IVGSLCAIAGVLTIALPVPVIVSNFNYFY) form a helical membrane-spanning segment. Residues 416–495 (HRETEGEEQA…VNKSKLLTDV (80 aa)) are Cytoplasmic-facing. 2 positions are modified to phosphoserine: S437 and S439. Phosphoserine; by PKA is present on S446. The PDZ-binding signature appears at 493–495 (TDV).

The protein belongs to the potassium channel family. A (Shaker) (TC 1.A.1.2) subfamily. Kv1.1/KCNA1 sub-subfamily. Homotetramer and heterotetramer with other channel-forming alpha subunits, such as KCNA2, KCNA4, KCNA5, KCNA6 and KCNA7. Channel activity is regulated by interaction with the beta subunits KCNAB1 and KCNAB2. Identified in a complex with KCNA2 and KCNAB2. Interacts (via C-terminus) with the PDZ domains of DLG1, DLG2 and DLG4. Interacts with LGI1 within a complex containing LGI1, KCNA4 and KCNAB1. Interacts (via N-terminus) with STX1A; this promotes channel inactivation. Interacts (via N-terminus) with the heterodimer formed by GNB1 and GNG2; this promotes channel inactivation. Can interact simultaneously with STX1A and the heterodimer formed by GNB1 and GNG2. Interacts (via cytoplasmic N-terminal domain) with KCNRG; this inhibits channel activity. Interacts with ANK3; this inhibits channel activity. Interacts with ADAM11. Post-translationally, N-glycosylated. In terms of processing, palmitoylated on Cys-243; which may be required for membrane targeting. Phosphorylated on tyrosine residues. Phosphorylation increases in response to NRG1; this inhibits channel activity. Phosphorylation at Ser-446 regulates channel activity by down-regulating expression at the cell membrane. As to expression, detected in brain. Expressed in cerebellar cortex basket cell terminals, the area surround the Purkinje cell soma, and the pinceaux expansions encircling the axon initial segment (at protein level). Detected in the juxtaparanodal regions of the nodes of Ranvier in myelinated axons. Detected in the paranodal region in sciatic nerve. Detected on cell bodies in cerebellum, dorsal and ventral cochlear nucleus, pontine reticular nucleus, mesencephalic trigeminal nucleus, motor trigeminal nucleus and the pricipal sensory trigeminal nucleus. Detected in terminal fields of basket cells in the cerebellum corpus medullare. Detected in hippocampus CA3 pyramidal neurons and in the hilus and stratum moleculare of the dentate gyrus. Detected in the central nucleus and the external nucleus of the inferior colliculus. Detected in fiber tracts in the optic tract, external medullary lamina, stria terminalis, medulla, ventral pallidum and substantia nigra. Detected in neurons from dorsal root ganglion. Detected in neurons in the medial nucleus of the trapezoid body. Detected in midbrain dopamine neuron axon terminals. Detected in brain cortex. Detected in brainstem. Detected in juxtaparanodal regions of the nodes of Ranvier in the vagus nerve, but only at very low levels in the heart. Detected in the islet of Langerhans. Detected at the luminal membrane in distal convoluted tubules in the kidney (at protein level). Detected in hippocampus, thalamus, neocortex and ventral brain cortex, including the piriform and entorhinal cortex and the amygdala. Detected in midbrain dopamine neurons. Detected in heart atrium, ventricle, sinoatrial node and atrioventricular node.

The protein resides in the cell membrane. The protein localises to the cell projection. It localises to the axon. Its subcellular location is the membrane. It is found in the perikaryon. The protein resides in the dendrite. The protein localises to the cell junction. It localises to the synapse. Its subcellular location is the cytoplasmic vesicle. It is found in the endoplasmic reticulum. The protein resides in the presynaptic cell membrane. The protein localises to the presynapse. The enzyme catalyses K(+)(in) = K(+)(out). Inhibited by 4-aminopyridine (4-AP), tetraethylammonium (TEA) and dendrotoxin (DTX), but not by charybdotoxin (CTX). Voltage-gated potassium channel that mediates transmembrane potassium transport in excitable membranes, primarily in the brain and the central nervous system, but also in the kidney. Contributes to the regulation of the membrane potential and nerve signaling, and prevents neuronal hyperexcitability. Forms tetrameric potassium-selective channels through which potassium ions pass in accordance with their electrochemical gradient. The channel alternates between opened and closed conformations in response to the voltage difference across the membrane. Can form functional homotetrameric channels and heterotetrameric channels that contain variable proportions of KCNA1, KCNA2, KCNA4, KCNA5, KCNA6, KCNA7, and possibly other family members as well; channel properties depend on the type of alpha subunits that are part of the channel. Channel properties are modulated by cytoplasmic beta subunits that regulate the subcellular location of the alpha subunits and promote rapid inactivation of delayed rectifier potassium channels. In vivo, membranes probably contain a mixture of heteromeric potassium channel complexes, making it difficult to assign currents observed in intact tissues to any particular potassium channel family member. Homotetrameric KCNA1 forms a delayed-rectifier potassium channel that opens in response to membrane depolarization, followed by slow spontaneous channel closure. In contrast, a heterotetrameric channel formed by KCNA1 and KCNA4 shows rapid inactivation. Regulates neuronal excitability in hippocampus, especially in mossy fibers and medial perforant path axons, preventing neuronal hyperexcitability. May function as down-stream effector for G protein-coupled receptors and inhibit GABAergic inputs to basolateral amygdala neurons. May contribute to the regulation of neurotransmitter release, such as gamma-aminobutyric acid (GABA) release. Plays a role in regulating the generation of action potentials and preventing hyperexcitability in myelinated axons of the vagus nerve, and thereby contributes to the regulation of heart contraction. Required for normal neuromuscular responses. Regulates the frequency of neuronal action potential firing in response to mechanical stimuli, and plays a role in the perception of pain caused by mechanical stimuli, but does not play a role in the perception of pain due to heat stimuli. Required for normal responses to auditory stimuli and precise location of sound sources, but not for sound perception. The use of toxins that block specific channels suggest that it contributes to the regulation of the axonal release of the neurotransmitter dopamine. Required for normal postnatal brain development and normal proliferation of neuronal precursor cells in the brain. Plays a role in the reabsorption of Mg(2+) in the distal convoluted tubules in the kidney and in magnesium ion homeostasis, probably via its effect on the membrane potential. The sequence is that of Potassium voltage-gated channel subfamily A member 1 from Mus musculus (Mouse).